The primary structure comprises 259 residues: Adenosylcobinamide-GDP ribazoletransferase (259 aa).

The next 7 helical transmembrane spans lie at 41 to 61, 67 to 87, 119 to 139, 148 to 168, 179 to 199, 200 to 220, and 237 to 257; these read AAIW…AIVF, FGLA…IATG, IGAY…NVLS, LFAL…FMHL, AGAG…GAIP, LLLL…LLFA, and TIGA…SVAL.

This sequence belongs to the CobS family. The cofactor is Mg(2+).

Its subcellular location is the cell inner membrane. It carries out the reaction alpha-ribazole + adenosylcob(III)inamide-GDP = adenosylcob(III)alamin + GMP + H(+). The enzyme catalyses alpha-ribazole 5'-phosphate + adenosylcob(III)inamide-GDP = adenosylcob(III)alamin 5'-phosphate + GMP + H(+). The protein operates within cofactor biosynthesis; adenosylcobalamin biosynthesis; adenosylcobalamin from cob(II)yrinate a,c-diamide: step 7/7. In terms of biological role, joins adenosylcobinamide-GDP and alpha-ribazole to generate adenosylcobalamin (Ado-cobalamin). Also synthesizes adenosylcobalamin 5'-phosphate from adenosylcobinamide-GDP and alpha-ribazole 5'-phosphate. In Mesorhizobium japonicum (strain LMG 29417 / CECT 9101 / MAFF 303099) (Mesorhizobium loti (strain MAFF 303099)), this protein is Adenosylcobinamide-GDP ribazoletransferase.